Reading from the N-terminus, the 452-residue chain is Adenylosuccinate synthetase isozyme 1 (452 aa).

Residues 1 to 22 (MSGTRASNDRSSHPGGHKRPRY) are disordered. GTP-binding positions include 37 to 43 (GDEGKGK) and 65 to 67 (GHT). Catalysis depends on aspartate 38, which acts as the Proton acceptor. Mg(2+) contacts are provided by aspartate 38 and glycine 65. Substrate is bound at residue aspartate 38. IMP-binding positions include 38–41 (DEGK), 63–66 (NAGH), threonine 158, arginine 172, asparagine 251, threonine 266, and arginine 330. Catalysis depends on histidine 66, which acts as the Proton donor. 326–332 (VTTGRKR) lines the substrate pocket. Residues arginine 332, 358–360 (KLD), and 440–443 (GVGK) each bind GTP.

Belongs to the adenylosuccinate synthetase family. Homodimer. The cofactor is Mg(2+).

The protein resides in the cytoplasm. The catalysed reaction is IMP + L-aspartate + GTP = N(6)-(1,2-dicarboxyethyl)-AMP + GDP + phosphate + 2 H(+). Its pathway is purine metabolism; AMP biosynthesis via de novo pathway; AMP from IMP: step 1/2. Its function is as follows. Component of the purine nucleotide cycle (PNC), which interconverts IMP and AMP to regulate the nucleotide levels in various tissues, and which contributes to glycolysis and ammoniagenesis. Catalyzes the first committed step in the biosynthesis of AMP from IMP. The chain is Adenylosuccinate synthetase isozyme 1 (adss1) from Xenopus tropicalis (Western clawed frog).